The sequence spans 340 residues: Pre-rRNA-processing protein esf-2 (340 aa).

Basic and acidic residues-rich tracts occupy residues 1–12 (MPEDDVRNKFLD) and 19–32 (DAGH…DFQK). Residues 1–103 (MPEDDVRNKF…KSVLASDLPG (103 aa)) form a disordered region. Acidic residues predominate over residues 44-64 (DDEDSEADDFTDAEEEHDQDD). Over residues 65 to 95 (AESKDAPAKDGQETTDGKEKKDGKKEKEKKS) the composition is skewed to basic and acidic residues. The 91-residue stretch at 124 to 214 (GVVYISRVPP…KKGSYYRDDI (91 aa)) folds into the RRM domain. The segment at 272–329 (AKKASKGSKAGGEGAAQVTESTIPSAAATTTTTTNDDKRRTFKQIPLAKKRKLDETQP) is disordered.

The protein belongs to the ESF2/ABP1 family.

The protein resides in the nucleus. The protein localises to the nucleolus. Its function is as follows. Involved in the small subunit (SSU) processome assembly and function, and in the 18S rRNA synthesis. Required for the early cleavages at sites A0, A1 and A2. The polypeptide is Pre-rRNA-processing protein esf-2 (esf-2) (Neurospora crassa (strain ATCC 24698 / 74-OR23-1A / CBS 708.71 / DSM 1257 / FGSC 987)).